Here is a 183-residue protein sequence, read N- to C-terminus: ATP-dependent protease subunit HslV (183 aa).

Residue T13 is part of the active site. Na(+) is bound by residues G168, C171, and T174.

It belongs to the peptidase T1B family. HslV subfamily. In terms of assembly, a double ring-shaped homohexamer of HslV is capped on each side by a ring-shaped HslU homohexamer. The assembly of the HslU/HslV complex is dependent on binding of ATP.

It is found in the cytoplasm. The enzyme catalyses ATP-dependent cleavage of peptide bonds with broad specificity.. Its activity is regulated as follows. Allosterically activated by HslU binding. Protease subunit of a proteasome-like degradation complex believed to be a general protein degrading machinery. In Xanthomonas euvesicatoria pv. vesicatoria (strain 85-10) (Xanthomonas campestris pv. vesicatoria), this protein is ATP-dependent protease subunit HslV.